A 466-amino-acid chain; its full sequence is Argininosuccinate lyase (466 aa).

Belongs to the lyase 1 family. Argininosuccinate lyase subfamily.

It is found in the cytoplasm. The enzyme catalyses 2-(N(omega)-L-arginino)succinate = fumarate + L-arginine. It participates in amino-acid biosynthesis; L-arginine biosynthesis; L-arginine from L-ornithine and carbamoyl phosphate: step 3/3. This is Argininosuccinate lyase from Methylocella silvestris (strain DSM 15510 / CIP 108128 / LMG 27833 / NCIMB 13906 / BL2).